The primary structure comprises 292 residues: Expansin-like protein 6 (292 aa).

Positions 1-24 (MIKIIYLIVLLVLLFKNNHIIIKA) are cleaved as a signal peptide. Over 25-267 (DDCPFPQIPI…QITSNSNNIL (243 aa)) the chain is Extracellular. Positions 47 to 150 (HASCGFEKLT…IKVPCPTYGN (104 aa)) constitute an Expansin-like EG45 domain. Cystine bridges form between C50-C80 and C83-C145. N92 is a glycosylation site (N-linked (GlcNAc...) asparagine). The chain crosses the membrane as a helical span at residues 268–288 (PPSLYIIFLISILFLIINNIF). The Cytoplasmic portion of the chain corresponds to 289-292 (SNKY).

Belongs to the expansin family. Expansin A subfamily.

Its subcellular location is the membrane. May serve to lubricate the movement of the cellulose microfibrils during cell growth and wall extension and/or may serve to maintain the fluid state of the slug cell wall. This chain is Expansin-like protein 6 (expl6), found in Dictyostelium discoideum (Social amoeba).